We begin with the raw amino-acid sequence, 138 residues long: HTH-type transcriptional regulator CymR (138 aa).

Residues 2–125 (KISTKGRYGL…DSTTLEDLAS (124 aa)) form the HTH rrf2-type domain. Residues 28–51 (LKSIAQTNNLSEHYLEQLVSPLRN) constitute a DNA-binding region (H-T-H motif).

As to quaternary structure, homodimer. Forms homotetramers at higher concentrations of protein. Forms CymR(2):CysK(2) or CymR(4):CysK(4) complexes in the absence of O-acetylserine.

Master repressor of cysteine metabolism in B.subtilis. Controls the expression of genes involved either in cysteine synthesis from sulfide (cysK), sulfonates (ssu), or methionine (mccAB) or in cystine uptake (tcyP). Activity of CymR is positively regulated by CysK in response to cysteine availability. When cysteine is present, the pool of O-acetylserine (OAS) is low, which leads to the formation of a CymR-CysK complex and transcriptional repression of the CymR regulon occurs. In the absence of cysteine, the OAS pool is high and the CymR-CysK complex is mostly dissociated, leading to a faster dissociation of CymR from its DNA targets and the lifting of CymR-dependent repression. This Bacillus subtilis (strain 168) protein is HTH-type transcriptional regulator CymR (cymR).